We begin with the raw amino-acid sequence, 185 residues long: GTP-binding protein rhb1 (185 aa).

Positions 16, 18, 19, 20, 21, 32, 35, 38, 119, 122, and 150 each coordinate GTP. S20 provides a ligand contact to Mg(2+). Residues 35–43 carry the Effector region motif; the sequence is YYPTIENTF. Position 38 (T38) interacts with Mg(2+). At C182 the chain carries Cysteine methyl ester. Residue C182 is the site of S-farnesyl cysteine attachment. Positions 183–185 are cleaved as a propeptide — removed in mature form; the sequence is VIA.

The protein belongs to the small GTPase superfamily. Rheb family.

It localises to the cell membrane. The enzyme catalyses GTP + H2O = GDP + phosphate + H(+). Binds GTP and exhibits intrinsic GTPase activity. Regulates entry into stationary phase when extracellular nitrogen levels are adequate for growth. This chain is GTP-binding protein rhb1 (rhb1), found in Schizosaccharomyces pombe (strain 972 / ATCC 24843) (Fission yeast).